The sequence spans 458 residues: N-acetylgalactosamine kinase (458 aa).

Alpha-D-galactose is bound by residues Arg-43, Glu-49, His-50, and Asp-52. Gly-143, Ser-145, and Ser-146 together coordinate ATP. An alpha-D-galactose-binding site is contributed by Asp-190. The active-site Proton acceptor is the Asp-190. ATP is bound by residues Asn-233 and Lys-234.

The protein belongs to the GHMP kinase family. GalK subfamily. Monomer.

The catalysed reaction is N-acetyl-alpha-D-galactosamine + ATP = N-acetyl-alpha-D-galactosamine 1-phosphate + ADP + H(+). Functionally, acts on GalNAc. Also acts as a galactokinase when galactose is present at high concentrations. May be involved in a salvage pathway for the reutilization of free GalNAc derived from the degradation of complex carbohydrates. The protein is N-acetylgalactosamine kinase (GALK2) of Homo sapiens (Human).